The following is a 596-amino-acid chain: Elongation factor 4 (596 aa).

Positions 2–184 (KQIRNFSIIA…VIVAKIPPPE (183 aa)) constitute a tr-type G domain. GTP is bound by residues 14–19 (DHGKST) and 131–134 (NKID).

This sequence belongs to the TRAFAC class translation factor GTPase superfamily. Classic translation factor GTPase family. LepA subfamily.

It localises to the cell inner membrane. The enzyme catalyses GTP + H2O = GDP + phosphate + H(+). Functionally, required for accurate and efficient protein synthesis under certain stress conditions. May act as a fidelity factor of the translation reaction, by catalyzing a one-codon backward translocation of tRNAs on improperly translocated ribosomes. Back-translocation proceeds from a post-translocation (POST) complex to a pre-translocation (PRE) complex, thus giving elongation factor G a second chance to translocate the tRNAs correctly. Binds to ribosomes in a GTP-dependent manner. The protein is Elongation factor 4 of Shewanella baltica (strain OS155 / ATCC BAA-1091).